We begin with the raw amino-acid sequence, 445 residues long: Argininosuccinate synthase (445 aa).

Residues 17–25 (AFSGGLDTS) and Ala43 each bind ATP. Tyr99 serves as a coordination point for L-citrulline. ATP is bound by residues Gly129 and Thr131. Residues Thr131, Asn135, and Asp136 each coordinate L-aspartate. An L-citrulline-binding site is contributed by Asn135. Asp136 contacts ATP. Residues Arg139 and Ser192 each contribute to the L-citrulline site. Asp194 contacts ATP. Residues Thr201, Glu203, and Glu280 each coordinate L-citrulline.

It belongs to the argininosuccinate synthase family. Type 2 subfamily. As to quaternary structure, homotetramer.

It localises to the cytoplasm. The catalysed reaction is L-citrulline + L-aspartate + ATP = 2-(N(omega)-L-arginino)succinate + AMP + diphosphate + H(+). Its pathway is amino-acid biosynthesis; L-arginine biosynthesis; L-arginine from L-ornithine and carbamoyl phosphate: step 2/3. This Polaromonas naphthalenivorans (strain CJ2) protein is Argininosuccinate synthase.